The primary structure comprises 174 residues: Gamma-crystallin C (174 aa).

2 Beta/gamma crystallin 'Greek key' domains span residues 2-40 (GKIT…RVDS) and 41-83 (GCWM…CLIS). Position 23 is an S-methylcysteine (Cys-23). The interval 84–87 (DTSS) is connecting peptide. 2 Beta/gamma crystallin 'Greek key' domains span residues 88–128 (HRLR…HVLE) and 129–171 (GCWV…RRVV).

The protein belongs to the beta/gamma-crystallin family.

Functionally, crystallins are the dominant structural components of the vertebrate eye lens. The polypeptide is Gamma-crystallin C (CRYGC) (Bos taurus (Bovine)).